Consider the following 684-residue polypeptide: MMLRFRSFSTTTHLLRGQNLTEKIVQKYAVGLQPSSKKVYSGDYVTIKPAHCMSHDNSWPVATKFMNLGASKVKDNRQIVCTLDHDVQNKSEQNLTKYTNIEKFAKSQGIDFYPAGRGIGHQIMIEEGYAFPLNLTVASDSHSNTYGGIGALGTPIVRTDAASIWATGQTWWQIPPVAKVELIGQLPKGVTGKDIIVALCGIFNNDEVLNHAIEFVGDDAISKLPIDYRLTIANMTTEWGALSGLFPVDETLVEFYQNRLKKLNKPDHPRINNQTIDQLINNKLTSDNDAVYAKHLQIDLSSLSPYISGPNSVKISNSLYDLSQQNIAINKAYLVSCTNSRLSDIQAAADIIKGHKVNPNVEFYVAAASSLVQKDAEQSGAWQTILDAGAKPLPAGCGPCIGLGTGLLKDGEVGISATNRNFKGRMGSKDALAYLASPEVVAASAVLGKIGGPEELNGEPVKQAPRIIKSIETESNSANEAESTSEEASGSIDILPGFPQSIEGELILCNADNINTDGIYPGKYTYQDDITKEQMAKVCMENYDSQFYSKTKPGDIIISGYNFGTGSSREQAATCILARGMKLIVAGSFGNIFSRNSINNALLTLEIPDLINKLRQQYEGNDELTIRTGWFLKWDVTKAQVTVVDGDDNLILTQKVGELGTNLQDIIVKGGLEGWVKSELKTNQ.

Residues C337, C397, and C400 each contribute to the [4Fe-4S] cluster site.

The protein belongs to the aconitase/IPM isomerase family. [4Fe-4S] cluster serves as cofactor.

Its subcellular location is the mitochondrion. It carries out the reaction (2R,3S)-homoisocitrate = cis-homoaconitate + H2O. The protein operates within amino-acid biosynthesis; L-lysine biosynthesis via AAA pathway; L-alpha-aminoadipate from 2-oxoglutarate: step 3/5. In terms of biological role, catalyzes the reversible hydration of cis-homoaconitate to (2R,3S)-homoisocitrate, a step in the alpha-aminoadipate pathway for lysine biosynthesis. The polypeptide is Homoaconitase, mitochondrial (LYS4) (Candida albicans (strain SC5314 / ATCC MYA-2876) (Yeast)).